The sequence spans 219 residues: Octanoyltransferase (219 aa).

The 176-residue stretch at 32-207 (ADSGDEIWLL…HLVRQLGYAQ (176 aa)) folds into the BPL/LPL catalytic domain. Substrate contacts are provided by residues 71 to 78 (RGGQVTYH), 138 to 140 (SLG), and 151 to 153 (GLA). Cys-169 (acyl-thioester intermediate) is an active-site residue.

This sequence belongs to the LipB family.

The protein localises to the cytoplasm. It catalyses the reaction octanoyl-[ACP] + L-lysyl-[protein] = N(6)-octanoyl-L-lysyl-[protein] + holo-[ACP] + H(+). The protein operates within protein modification; protein lipoylation via endogenous pathway; protein N(6)-(lipoyl)lysine from octanoyl-[acyl-carrier-protein]: step 1/2. In terms of biological role, catalyzes the transfer of endogenously produced octanoic acid from octanoyl-acyl-carrier-protein onto the lipoyl domains of lipoate-dependent enzymes. Lipoyl-ACP can also act as a substrate although octanoyl-ACP is likely to be the physiological substrate. This is Octanoyltransferase from Stutzerimonas stutzeri (strain A1501) (Pseudomonas stutzeri).